Consider the following 132-residue polypeptide: uncharacterized protein (132 aa).

It to M.jannaschii MJ0661.

This is an uncharacterized protein from Helicobacter pylori (strain ATCC 700392 / 26695) (Campylobacter pylori).